The sequence spans 88 residues: MTFRNGGRLMRGRGGRRKVCEFSRLGILPDYKDPERLRRFLGPTGKILPRRRTGLTAKMQRRLTIAIKRARHMALLPFVERSVTDRRR.

The protein belongs to the bacterial ribosomal protein bS18 family. In terms of assembly, part of the 30S ribosomal subunit. Forms a tight heterodimer with protein bS6.

In terms of biological role, binds as a heterodimer with protein bS6 to the central domain of the 16S rRNA, where it helps stabilize the platform of the 30S subunit. This chain is Small ribosomal subunit protein bS18B, found in Roseiflexus castenholzii (strain DSM 13941 / HLO8).